We begin with the raw amino-acid sequence, 344 residues long: Arginine N-succinyltransferase (344 aa).

Residue leucine 125 participates in succinyl-CoA binding. Histidine 229 acts as the Proton donor in catalysis.

The protein belongs to the arginine N-succinyltransferase family.

The catalysed reaction is succinyl-CoA + L-arginine = N(2)-succinyl-L-arginine + CoA + H(+). The protein operates within amino-acid degradation; L-arginine degradation via AST pathway; L-glutamate and succinate from L-arginine: step 1/5. Catalyzes the transfer of succinyl-CoA to arginine to produce N(2)-succinylarginine. This Shigella flexneri serotype 5b (strain 8401) protein is Arginine N-succinyltransferase.